We begin with the raw amino-acid sequence, 78 residues long: UPF0335 protein RrIowa_0193 (78 aa).

Belongs to the UPF0335 family.

This chain is UPF0335 protein RrIowa_0193, found in Rickettsia rickettsii (strain Iowa).